Consider the following 238-residue polypeptide: Ribosomal RNA small subunit methyltransferase G (238 aa).

S-adenosyl-L-methionine contacts are provided by residues G77, F82, 128–129 (AE), and R147.

Belongs to the methyltransferase superfamily. RNA methyltransferase RsmG family.

Its subcellular location is the cytoplasm. In terms of biological role, specifically methylates the N7 position of guanine in position 535 of 16S rRNA. This is Ribosomal RNA small subunit methyltransferase G from Listeria welshimeri serovar 6b (strain ATCC 35897 / DSM 20650 / CCUG 15529 / CIP 8149 / NCTC 11857 / SLCC 5334 / V8).